Here is a 385-residue protein sequence, read N- to C-terminus: AA13 family lytic polysaccharide monooxygenase NCU08746 (385 aa).

Positions 1–18 are cleaved as a signal peptide; it reads MKFSIISVALASAITVDA. Histidine 19 lines the Cu(2+) pocket. The residue at position 19 (histidine 19) is a Methylhistidine. Positions 19–248 constitute a Chitin-binding type-4 domain; that stretch reads HGYLTIPFSR…AQVYLSCADI (230 aa). A disulfide bridge connects residues cysteine 40 and cysteine 43. A glycan (N-linked (GlcNAc...) asparagine) is linked at asparagine 54. 6 disulfide bridges follow: cysteine 66–cysteine 245, cysteine 102–cysteine 203, cysteine 118–cysteine 145, cysteine 153–cysteine 161, cysteine 167–cysteine 173, and cysteine 181–cysteine 192. Histidine 109 contacts Cu(2+). Tyrosine 242 is a binding site for Cu(2+). A CBM20 domain is found at 278 to 385; sequence CTPAATVAVT…ESVAVESSWK (108 aa). Residue asparagine 365 is glycosylated (N-linked (GlcNAc...) asparagine).

Belongs to the polysaccharide monooxygenase AA13 family. Requires Cu(2+) as cofactor.

It localises to the secreted. It carries out the reaction starch + reduced acceptor + O2 = D-glucono-1,5-lactone-terminated malto-oligosaccharides + short-chain malto-oligosaccharides + acceptor + H2O.. Its function is as follows. Starch-active lytic polysaccharide monooxygenase that oxidizes the C1 position of starch substrates, but not in cellulose or chitin. Catalysis by LPMOs requires the reduction of the active-site copper from Cu(II) to Cu(I) by a reducing agent and H(2)O(2) or O(2) as a cosubstrate. The sequence is that of AA13 family lytic polysaccharide monooxygenase NCU08746 from Neurospora crassa (strain ATCC 24698 / 74-OR23-1A / CBS 708.71 / DSM 1257 / FGSC 987).